The chain runs to 141 residues: Protein E6 (141 aa).

Zinc fingers lie at residues 27–64 (CRFC…CSSC) and 101–137 (CQYC…CRHC).

This sequence belongs to the papillomaviridae E6 protein family. In terms of assembly, forms homodimers. Interacts with ubiquitin-protein ligase UBE3A/E6-AP; this interaction stimulates UBE3A ubiquitin activity. Interacts with host BAK1.

It is found in the host cytoplasm. The protein resides in the host nucleus. Functionally, plays a major role in the induction and maintenance of cellular transformation. E6 associates with host UBE3A/E6-AP ubiquitin-protein ligase and modulates its activity. Protects host keratinocytes from apoptosis by mediating the degradation of host BAK1. May also inhibit host immune response. This is Protein E6 from Homo sapiens (Human).